We begin with the raw amino-acid sequence, 1722 residues long: Signal-induced proliferation-associated 1-like protein 2 (1722 aa).

Disordered stretches follow at residues 1–29 (MSDP…RAMQ) and 45–73 (MGPA…PAVP). The segment covering 57-66 (EGGGGGGGPA) has biased composition (gly residues). Phosphoserine is present on residues Ser-149, Ser-380, and Ser-384. The disordered stretch occupies residues 362–404 (ASAASQTPVPVGPAGGCESPLGSKEDLNAKENPDADEGDGKSN). The span at 384–403 (SKEDLNAKENPDADEGDGKS) shows a compositional bias: basic and acidic residues. One can recognise a Rap-GAP domain in the interval 596–813 (LLKLDEQGLS…RTRHEYLKDL (218 aa)). One can recognise a PDZ domain in the interval 951–1027 (EMTLRRNGLG…VKVVIIQPHE (77 aa)). Residue Ser-1030 is modified to Phosphoserine. Disordered regions lie at residues 1068 to 1172 (HRVP…DHED), 1197 to 1246 (ERAL…FGSG), and 1328 to 1361 (AADG…KSTG). 2 stretches are compositionally biased toward low complexity: residues 1091 to 1103 (LQCQ…AQAA) and 1120 to 1131 (SSPSNQSSSSDP). The span at 1197-1218 (ERALQKDGSCKDSPNKLSHIGD) shows a compositional bias: basic and acidic residues. Residues 1220-1237 (SCSSHSSSNTLSSNTSSN) show a composition bias toward low complexity. Phosphoserine is present on Ser-1245. Residues 1328–1355 (AADGSMGDLSEVSSHSSGSHRSGSPSTH) are compositionally biased toward low complexity. Ser-1461, Ser-1472, Ser-1478, Ser-1488, Ser-1549, Ser-1552, and Ser-1591 each carry phosphoserine. The stretch at 1652–1712 (STLTGKVNQL…ATAQLRTFTE (61 aa)) forms a coiled coil.

In Rattus norvegicus (Rat), this protein is Signal-induced proliferation-associated 1-like protein 2 (Sipa1l2).